A 202-amino-acid polypeptide reads, in one-letter code: MEPYSALLAVTILCLTSTMGVSGDCSTNISPKKGLDKAKYFSGTWYVTHYLDKDPQVTDPYCSSFTPKESGGTVKEALYHFNSKKKTSFYNIGEGKLGSSGVQYTAKYNTVDKKRKEIEPADPKDSYTLTVLEADDSSALVHICLREGPKDLGDLYTVLSHQKTGEPSATVKNAVAQAGLKLNDFVDTKTLSCTYDDQFTSM.

The first 23 residues, 1 to 23, serve as a signal peptide directing secretion; that stretch reads MEPYSALLAVTILCLTSTMGVSG. Disulfide bonds link C25-C144 and C62-C193. H80 lines the heme pocket.

This sequence belongs to the calycin superfamily. Nitrophorin family. As to quaternary structure, interacts weakly with host coagulation factor IX (F9) (inactive and activated) in the presence of Ca(2+). Salivary gland (at protein level).

The protein resides in the secreted. Functionally, heme-based protein that deliver nitric oxide gas (NO) to the victim while feeding, resulting in vasodilation and inhibition of platelet aggregation. Reversibly binds nitric oxide (NO). Also binds tightly to histamine, which is released by the host to induce wound healing. Exhibits weak anticoagulant activity. The protein is Nitrophorin-3 of Rhodnius prolixus (Triatomid bug).